The following is a 228-amino-acid chain: THAP domain-containing protein 2 (228 aa).

Residues Met1–Phe80 form a THAP-type zinc finger. An HCFC1-binding motif (HBM) motif is present at residues Glu123–Tyr126.

In Homo sapiens (Human), this protein is THAP domain-containing protein 2 (THAP2).